A 263-amino-acid chain; its full sequence is uncharacterized protein (263 aa).

12-19 (KGGVGKTT) serves as a coordination point for ATP.

It belongs to the ParA family. MinD subfamily.

This is an uncharacterized protein from Methanocaldococcus jannaschii (strain ATCC 43067 / DSM 2661 / JAL-1 / JCM 10045 / NBRC 100440) (Methanococcus jannaschii).